A 2543-amino-acid chain; its full sequence is Zinc finger FYVE domain-containing protein 26 (2543 aa).

Serine 297 carries the phosphoserine modification. Disordered regions lie at residues 523–545 (ECRD…SLSS), 609–636 (GLLG…GCQE), 699–722 (LSSH…SRDG), and 744–820 (VTSN…GRLQ). Serine 615, serine 619, and serine 703 each carry phosphoserine. Basic and acidic residues predominate over residues 699 to 710 (LSSHSPPEKPKL). The span at 767–776 (SLRRGRRTRR) shows a compositional bias: basic residues. The segment covering 786–806 (SNPSLESTSSELSTSTSEGSL) has biased composition (low complexity). Serine 802 bears the Phosphoserine mark. A coiled-coil region spans residues 870-897 (MFMERYQEVIQELSRVEHKIENQNSDGG). Residues 1272–1299 (LSTLSSPKPTGNSTLERKPHSSPRDSSL) are disordered. The segment covering 1273–1285 (STLSSPKPTGNST) has biased composition (polar residues). Phosphoserine is present on residues serine 1744, serine 1765, serine 1784, and serine 1786. Positions 1780-1812 (STIHSPSPRERSFPESQPPPEFVPPATPPGRPQ) are disordered. Positions 1795–1810 (SQPPPEFVPPATPPGR) are enriched in pro residues. Residues 1816 to 1876 (DESASICMVC…VCDQCYSYYN (61 aa)) form an FYVE-type zinc finger. Zn(2+) is bound by residues cysteine 1822, cysteine 1825, cysteine 1839, cysteine 1842, cysteine 1847, cysteine 1850, cysteine 1868, and cysteine 1871.

The protein belongs to the ZFYVE26 family. In terms of assembly, interacts with AP5Z1, AP5B1, AP5S1 and SPG11. Interacts with TTC19 and KIF13A.

It localises to the cytoplasm. It is found in the cytoskeleton. The protein localises to the microtubule organizing center. Its subcellular location is the centrosome. The protein resides in the midbody. In terms of biological role, phosphatidylinositol 3-phosphate-binding protein required for the abscission step in cytokinesis: recruited to the midbody during cytokinesis and acts as a regulator of abscission. May also be required for efficient homologous recombination DNA double-strand break repair. The sequence is that of Zinc finger FYVE domain-containing protein 26 (ZFYVE26) from Ailuropoda melanoleuca (Giant panda).